The following is a 350-amino-acid chain: 4-hydroxy-3-methylbut-2-en-1-yl diphosphate synthase (flavodoxin) (350 aa).

The [4Fe-4S] cluster site is built by cysteine 263, cysteine 266, cysteine 298, and glutamate 305.

This sequence belongs to the IspG family. It depends on [4Fe-4S] cluster as a cofactor.

It catalyses the reaction (2E)-4-hydroxy-3-methylbut-2-enyl diphosphate + oxidized [flavodoxin] + H2O + 2 H(+) = 2-C-methyl-D-erythritol 2,4-cyclic diphosphate + reduced [flavodoxin]. It functions in the pathway isoprenoid biosynthesis; isopentenyl diphosphate biosynthesis via DXP pathway; isopentenyl diphosphate from 1-deoxy-D-xylulose 5-phosphate: step 5/6. Its function is as follows. Converts 2C-methyl-D-erythritol 2,4-cyclodiphosphate (ME-2,4cPP) into 1-hydroxy-2-methyl-2-(E)-butenyl 4-diphosphate. This chain is 4-hydroxy-3-methylbut-2-en-1-yl diphosphate synthase (flavodoxin), found in Nautilia profundicola (strain ATCC BAA-1463 / DSM 18972 / AmH).